The chain runs to 503 residues: MKEYQVYLERDRSRQQDFLYPLIFREYIYGLAYSHDFNRSSFVENVGYDNKFSLLIVKRLITRMYQQNHLIISANDSNKNPFLGYNXNFYSQIISEGFAIVVEIPFFLQLSSSLEEAEIVKSYQNLRSIHSIFPFLEDKFTYLNYVSDIRIPYPIHLEILVQILRYWVKDAPFFHLLRLFLYNFCNWNSFSTPKSTFSKSNPRLFLFLYNFYVCEYESIFLFLRKKSSHLRLKSFSVFFERIFFYAKREHLVEVFAKDFSSTLTFFNDPLIHYVRYQGKSILASKNGPLVMNKWKHYCIHLWQCFFDIWSQPGTIHINQLSEHSFHLLGYFSNVRLNRSVVRSQMLQNTFLIEIVSKKLDIIVPIIPLIRSLAKAKFCNVLRDPISKPVWGDSSDFDIIERFLRICRNLSHYYNGSSKKKSLYRIKYILRLSCIKTLACKHKTTVRAFLKRSGSEELLEEFFTEEEGILSLIFPRASSTLQRLHRNRIWYLDILFSNDLVNHE.

Belongs to the intron maturase 2 family. MatK subfamily.

It is found in the plastid. The protein localises to the chloroplast. In terms of biological role, usually encoded in the trnK tRNA gene intron. Probably assists in splicing its own and other chloroplast group II introns. The protein is Maturase K of Caragana arborescens (Siberian pea tree).